Reading from the N-terminus, the 235-residue chain is Probable transcriptional regulatory protein Ccur92_05350 (235 aa).

The protein belongs to the TACO1 family.

Its subcellular location is the cytoplasm. The sequence is that of Probable transcriptional regulatory protein Ccur92_05350 from Campylobacter curvus (strain 525.92).